Here is a 141-residue protein sequence, read N- to C-terminus: Large ribosomal subunit protein uL16 (141 aa).

Belongs to the universal ribosomal protein uL16 family. As to quaternary structure, part of the 50S ribosomal subunit. Contacts the CTC protein (RL25).

Functionally, binds the 5S and 23S rRNAs and is also seen to make contacts with the A and P site tRNAs. Interacts with A site tRNA mimics, and is probably one of the key factors, along with a helix of the 23S rRNA, in positioning tRNA stems in the peptidyl-transferase center. The chain is Large ribosomal subunit protein uL16 (rplP) from Deinococcus radiodurans (strain ATCC 13939 / DSM 20539 / JCM 16871 / CCUG 27074 / LMG 4051 / NBRC 15346 / NCIMB 9279 / VKM B-1422 / R1).